Reading from the N-terminus, the 740-residue chain is DNA-directed RNA polymerase subunit beta' (740 aa).

Zn(2+) is bound by residues Cys-65, Cys-67, Cys-103, and Cys-106. Mg(2+) contacts are provided by Asp-539, Asp-541, and Asp-543.

It belongs to the RNA polymerase beta' chain family. RpoC1 subfamily. In terms of assembly, in plastids the minimal PEP RNA polymerase catalytic core is composed of four subunits: alpha, beta, beta', and beta''. When a (nuclear-encoded) sigma factor is associated with the core the holoenzyme is formed, which can initiate transcription. It depends on Mg(2+) as a cofactor. The cofactor is Zn(2+).

The protein localises to the plastid. It is found in the chloroplast. It catalyses the reaction RNA(n) + a ribonucleoside 5'-triphosphate = RNA(n+1) + diphosphate. Its function is as follows. DNA-dependent RNA polymerase catalyzes the transcription of DNA into RNA using the four ribonucleoside triphosphates as substrates. The protein is DNA-directed RNA polymerase subunit beta' of Ostreococcus tauri.